The sequence spans 210 residues: Large ribosomal subunit protein uL4 (210 aa).

The segment covering 41–52 has biased composition (polar residues); the sequence is MNNARQGTASSK. The interval 41–80 is disordered; it reads MNNARQGTASSKTRSEVRGGGRKPWRQKGTGRARAGSSRS. The segment covering 60-71 has biased composition (basic residues); sequence GGRKPWRQKGTG.

The protein belongs to the universal ribosomal protein uL4 family. In terms of assembly, part of the 50S ribosomal subunit.

One of the primary rRNA binding proteins, this protein initially binds near the 5'-end of the 23S rRNA. It is important during the early stages of 50S assembly. It makes multiple contacts with different domains of the 23S rRNA in the assembled 50S subunit and ribosome. Functionally, forms part of the polypeptide exit tunnel. This Acaryochloris marina (strain MBIC 11017) protein is Large ribosomal subunit protein uL4.